The following is a 313-amino-acid chain: PDCD10 and GCKIII kinases-associated protein 1 (313 aa).

The segment at 40-89 (RLKGTQNSEVEVPRNALHDGSLSNSESRGSTTGLPHQGPLPQEDSEERPC) is disordered. A phosphoserine mark is found at Ser60 and Ser64. The segment covering 60–73 (SLSNSESRGSTTGL) has biased composition (polar residues). Position 104 is a phosphothreonine (Thr104). Ser107, Ser237, and Ser240 each carry phosphoserine. The segment at 253–286 (YFKEEGPTHPTPAADSGSEREDPHTYNGDREGVV) is disordered. Basic and acidic residues predominate over residues 269–285 (GSEREDPHTYNGDREGV).

As to quaternary structure, interacts with KEAP1; this interaction prevents the ubiquitination of KEAP1 by TRIM25, thus protecting KEAP1 from degradation. Found in association with PDCD10 and members of the STE20 kinases, such as STK24, STK25 and STK26.

It is found in the cell membrane. Functionally, acts as a tumor suppressor. Acts as a tumor suppressor for colorectal cancer cell proliferation by targeting KEAP1/USP17/ELK1/CDK6 axis. The polypeptide is PDCD10 and GCKIII kinases-associated protein 1 (Mus musculus (Mouse)).